The sequence spans 298 residues: Triosephosphate isomerase, chloroplastic (298 aa).

Residues 1-18 are compositionally biased toward pro residues; the sequence is MAARRPSPPPASPPPPRP. The disordered stretch occupies residues 1–32; that stretch reads MAARRPSPPPASPPPPRPRSTTTTRTTSSASA. Residues 1–43 constitute a chloroplast transit peptide; the sequence is MAARRPSPPPASPPPPRPRSTTTTRTTSSASAAPAAAQRLVAM. A compositionally biased stretch (low complexity) spans 19–32; the sequence is RSTTTTRTTSSASA. Substrate contacts are provided by Asn54 and Lys56. The active-site Electrophile is the His138. The residue at position 186 (Cys186) is a Cysteine derivative. Glu208 serves as the catalytic Proton acceptor.

The protein belongs to the triosephosphate isomerase family. Homodimer.

The protein localises to the plastid. Its subcellular location is the chloroplast. The enzyme catalyses D-glyceraldehyde 3-phosphate = dihydroxyacetone phosphate. Its pathway is carbohydrate biosynthesis; Calvin cycle. This chain is Triosephosphate isomerase, chloroplastic, found in Secale cereale (Rye).